The following is a 93-amino-acid chain: Small ribosomal subunit protein uS19 (93 aa).

The protein belongs to the universal ribosomal protein uS19 family.

Functionally, protein S19 forms a complex with S13 that binds strongly to the 16S ribosomal RNA. The sequence is that of Small ribosomal subunit protein uS19 from Campylobacter fetus subsp. fetus (strain 82-40).